We begin with the raw amino-acid sequence, 657 residues long: UvrABC system protein B (657 aa).

The region spanning K25–R182 is the Helicase ATP-binding domain. ATP is bound at residue G38–T45. The short motif at Y91–I114 is the Beta-hairpin element. In terms of domain architecture, Helicase C-terminal spans Q429 to I595. The 36-residue stretch at K621 to K656 folds into the UVR domain.

The protein belongs to the UvrB family. Forms a heterotetramer with UvrA during the search for lesions. Interacts with UvrC in an incision complex.

The protein localises to the cytoplasm. Functionally, the UvrABC repair system catalyzes the recognition and processing of DNA lesions. A damage recognition complex composed of 2 UvrA and 2 UvrB subunits scans DNA for abnormalities. Upon binding of the UvrA(2)B(2) complex to a putative damaged site, the DNA wraps around one UvrB monomer. DNA wrap is dependent on ATP binding by UvrB and probably causes local melting of the DNA helix, facilitating insertion of UvrB beta-hairpin between the DNA strands. Then UvrB probes one DNA strand for the presence of a lesion. If a lesion is found the UvrA subunits dissociate and the UvrB-DNA preincision complex is formed. This complex is subsequently bound by UvrC and the second UvrB is released. If no lesion is found, the DNA wraps around the other UvrB subunit that will check the other stand for damage. The chain is UvrABC system protein B from Clostridium botulinum (strain Eklund 17B / Type B).